The chain runs to 150 residues: Large ribosomal subunit protein bL9 (150 aa).

It belongs to the bacterial ribosomal protein bL9 family.

In terms of biological role, binds to the 23S rRNA. This Hydrogenovibrio crunogenus (strain DSM 25203 / XCL-2) (Thiomicrospira crunogena) protein is Large ribosomal subunit protein bL9.